The sequence spans 820 residues: MGRRGRGGGGGMGGGINRRYLSQVMDTCGKDLSTAEDIVDDLRSRYGNFARLTRQVLLLNVRQVLNVRNNKRVKDEDEDDNIGDEEGSASQRKKQRRVDEKEEKLQRAEQSHLRKRNMERSVSSSPSSSSSSEDSGDVSTSEDAVYGEKLSPPRFDLINDSLRDNYAKLNSSSKKPIGSPAEKNVEVETVSNKGRSKLATMGARKEAKVSLSLSGATGNGDLEVEGTKGPTFKDFGGIKKILDELEMNVLFPILNPEPFKKIGVKPPSGILFHGPPGCGKTKLANAIANEAGVPFYKISATEVISGVSGASEENIRELFSKAYRTAPSIVFIDEIDAIGSKRENQQREMEKRIVTQLLTCMDGPGNKGDKNAPDSSAGFVLVIGATNRPDALDPALRRSGRFETEIALTAPDEDARAEILSVVAQKLRLEGPFDKKRIARLTPGFVGADLESVAYLAGRKAIKRILDSRKSEQSGDGEDDKSWLRMPWPEEELEKLFVKMSDFEEAVNLVQASLTREGFSIVPDVKWDDVGGLDHLRLQFNRYIVRPIKKPDIYKAFGVDLETGFLLYGPPGCGKTLIAKAAANEAGANFMHIKGAELLNKYVGESELAIRTLFQRARTCAPCVIFFDEVDALTTSRGKEGAWVVERLLNQFLVELDGGERRNVYVIGATNRPDVVDPAFLRPGRFGNLLYVPLPNADERASILKAIARKKPIDPSVDLDGIAKNNCEGFSGADLAHLVQKATFQAVEEMIGSSESSEDDVTDITQCTIKTRHFEQALSLVSPSVNKQQRRHYDALSTKLQESVGRNTEQVTIGPSFTLE.

Disordered regions lie at residues 72-157 (RVKD…RFDL) and 169-188 (LNSSSKKPIGSPAEKNVEVE). Residues 76 to 87 (EDEDDNIGDEEG) are compositionally biased toward acidic residues. Residues 85–122 (EEGSASQRKKQRRVDEKEEKLQRAEQSHLRKRNMERSV) are a coiled coil. A compositionally biased stretch (basic and acidic residues) spans 97 to 119 (RVDEKEEKLQRAEQSHLRKRNME). Over residues 121-142 (SVSSSPSSSSSSEDSGDVSTSE) the composition is skewed to low complexity. ATP-binding positions include 274 to 281 (GPPGCGKT) and 569 to 576 (GPPGCGKT).

The protein belongs to the AAA ATPase family.

It is found in the nucleus. The protein localises to the cytoplasm. It localises to the cytoskeleton. The protein resides in the phragmoplast. Its function is as follows. Probably functions in cell division and growth processes. Interacts with certain SNAREs as part of specialized membrane fusion events where vesicles from the same organelle fuse (homotypic fusion). This chain is Cell division control protein 48 homolog C (CDC48C), found in Arabidopsis thaliana (Mouse-ear cress).